The following is a 207-amino-acid chain: Ras-related protein Rab-5B (207 aa).

Residue Gly2 is the site of N-myristoyl glycine attachment. GTP is bound by residues 41-49 (GDSGVGKSS), 60-66 (SEKHQVT), 90-94 (DTGGQ), 148-151 (NKKD), and 176-178 (SAK). The Effector region signature appears at 63–71 (HQVTIGAAF).

The protein belongs to the small GTPase superfamily. Rab family. As to quaternary structure, interacts with CK1. May interact with ARF1. Myristoylation is required for cell membrane and food vacuole membrane localization. In terms of processing, may be palmitoylated on Cys-3. Post-translationally, lacks the C-terminal cysteine motifs subject to isoprenylation present in mammalian RAB5B homolog.

Its subcellular location is the cell membrane. The protein localises to the vacuole membrane. It is found in the vesicle. It catalyses the reaction GTP + H2O = GDP + phosphate + H(+). Alternates between an inactive GDP-bound form and an active GTP-bound form. Activated by guanine nucleotide-exchange factors (GEFs) and inactivated by GTPase-activating proteins (GAPs). In terms of biological role, small GTPase which regulates vesicle trafficking between organelles. May be involved in the trafficking of the N-myristoylated AK2 from the endoplasmic reticulum to the parasitophorous vacuole membrane. The protein is Ras-related protein Rab-5B of Plasmodium falciparum (isolate 3D7).